The chain runs to 694 residues: Elongation factor G (694 aa).

A tr-type G domain is found at 10–285; the sequence is EKTRNIGIMA…GVVDYLPSPL (276 aa). GTP contacts are provided by residues 19–26, 83–87, and 137–140; these read AHIDAGKT, DTPGH, and NKMD.

The protein belongs to the TRAFAC class translation factor GTPase superfamily. Classic translation factor GTPase family. EF-G/EF-2 subfamily.

It localises to the cytoplasm. Functionally, catalyzes the GTP-dependent ribosomal translocation step during translation elongation. During this step, the ribosome changes from the pre-translocational (PRE) to the post-translocational (POST) state as the newly formed A-site-bound peptidyl-tRNA and P-site-bound deacylated tRNA move to the P and E sites, respectively. Catalyzes the coordinated movement of the two tRNA molecules, the mRNA and conformational changes in the ribosome. The chain is Elongation factor G from Lactobacillus delbrueckii subsp. bulgaricus (strain ATCC BAA-365 / Lb-18).